The primary structure comprises 350 residues: 5'-tyrosyl-DNA phosphodiesterase (350 aa).

Residues 113 to 117 (NIDGL) form an interaction with 5' end of substrate DNA region. Mg(2+) contacts are provided by aspartate 115 and glutamate 145. The segment at 219–224 (HLESMR) is interaction with 5' end of substrate DNA. The Proton donor/acceptor role is filled by aspartate 258. Residues 260-262 (NLR) form an interaction with 5' end of substrate DNA region.

It belongs to the CCR4/nocturin family. TTRAP/TDP2 subfamily. It depends on Mg(2+) as a cofactor. Mn(2+) serves as cofactor.

Its subcellular location is the nucleus. The protein resides in the PML body. In terms of biological role, DNA repair enzyme that can remove a variety of covalent adducts from DNA through hydrolysis of a 5'-phosphodiester bond, giving rise to DNA with a free 5' phosphate. Catalyzes the hydrolysis of dead-end complexes between DNA and the topoisomerase 2 (top2) active site tyrosine residue. Hydrolyzes 5'-phosphoglycolates on protruding 5' ends on DNA double-strand breaks (DSBs) due to DNA damage by radiation and free radicals. This Caenorhabditis briggsae protein is 5'-tyrosyl-DNA phosphodiesterase.